Consider the following 77-residue polypeptide: NAD(P)H-quinone oxidoreductase subunit L (77 aa).

A run of 2 helical transmembrane segments spans residues 10–30 (LLIA…LPAG) and 48–68 (LVMY…SPFL).

The protein belongs to the complex I NdhL subunit family. In terms of assembly, NDH-1 can be composed of about 15 different subunits; different subcomplexes with different compositions have been identified which probably have different functions.

Its subcellular location is the cellular thylakoid membrane. It catalyses the reaction a plastoquinone + NADH + (n+1) H(+)(in) = a plastoquinol + NAD(+) + n H(+)(out). It carries out the reaction a plastoquinone + NADPH + (n+1) H(+)(in) = a plastoquinol + NADP(+) + n H(+)(out). In terms of biological role, NDH-1 shuttles electrons from an unknown electron donor, via FMN and iron-sulfur (Fe-S) centers, to quinones in the respiratory and/or the photosynthetic chain. The immediate electron acceptor for the enzyme in this species is believed to be plastoquinone. Couples the redox reaction to proton translocation, and thus conserves the redox energy in a proton gradient. Cyanobacterial NDH-1 also plays a role in inorganic carbon-concentration. The chain is NAD(P)H-quinone oxidoreductase subunit L from Picosynechococcus sp. (strain ATCC 27264 / PCC 7002 / PR-6) (Agmenellum quadruplicatum).